Here is a 101-residue protein sequence, read N- to C-terminus: uncharacterized protein (101 aa).

Transmembrane regions (helical) follow at residues 20–40, 59–79, and 81–101; these read KHFI…LLGL, GVIA…MYIA, and SEMW…ALFF.

It is found in the endoplasmic reticulum. Its subcellular location is the membrane. This is an uncharacterized protein from Saccharomyces cerevisiae (strain ATCC 204508 / S288c) (Baker's yeast).